The sequence spans 555 residues: CTP synthase (555 aa).

Residues 1–265 are amidoligase domain; that stretch reads MTRYIFITGG…GNRVCEKLNI (265 aa). Serine 13 is a binding site for CTP. Serine 13 provides a ligand contact to UTP. ATP-binding positions include 14 to 19 and aspartate 71; that span reads SLGKGI. 2 residues coordinate Mg(2+): aspartate 71 and glutamate 139. CTP is bound by residues 146–148, 186–191, and lysine 222; these read DIE and KTKPTQ. UTP contacts are provided by residues 186–191 and lysine 222; that span reads KTKPTQ. The 252-residue stretch at 290–541 folds into the Glutamine amidotransferase type-1 domain; the sequence is TVAVVGKYVD…IKAGLAAKEA (252 aa). An L-glutamine-binding site is contributed by glycine 351. The active-site Nucleophile; for glutamine hydrolysis is the cysteine 378. Residues 379–382, glutamate 402, and arginine 469 each bind L-glutamine; that span reads LGMQ. Catalysis depends on residues histidine 514 and glutamate 516.

Belongs to the CTP synthase family. Homotetramer.

The catalysed reaction is UTP + L-glutamine + ATP + H2O = CTP + L-glutamate + ADP + phosphate + 2 H(+). It catalyses the reaction L-glutamine + H2O = L-glutamate + NH4(+). The enzyme catalyses UTP + NH4(+) + ATP = CTP + ADP + phosphate + 2 H(+). It participates in pyrimidine metabolism; CTP biosynthesis via de novo pathway; CTP from UDP: step 2/2. Its activity is regulated as follows. Allosterically activated by GTP, when glutamine is the substrate; GTP has no effect on the reaction when ammonia is the substrate. The allosteric effector GTP functions by stabilizing the protein conformation that binds the tetrahedral intermediate(s) formed during glutamine hydrolysis. Inhibited by the product CTP, via allosteric rather than competitive inhibition. Functionally, catalyzes the ATP-dependent amination of UTP to CTP with either L-glutamine or ammonia as the source of nitrogen. Regulates intracellular CTP levels through interactions with the four ribonucleotide triphosphates. This is CTP synthase from Coxiella burnetii (strain CbuG_Q212) (Coxiella burnetii (strain Q212)).